The chain runs to 160 residues: 2-C-methyl-D-erythritol 2,4-cyclodiphosphate synthase (160 aa).

2 residues coordinate a divalent metal cation: aspartate 9 and histidine 11. 4-CDP-2-C-methyl-D-erythritol 2-phosphate-binding positions include 9–11 (DVH) and 35–36 (HS). An a divalent metal cation-binding site is contributed by histidine 43. Residues 57–59 (DIG), 62–66 (FPDTD), 101–107 (AEAPKMA), 133–136 (TTSE), phenylalanine 140, and arginine 143 contribute to the 4-CDP-2-C-methyl-D-erythritol 2-phosphate site.

The protein belongs to the IspF family. As to quaternary structure, homotrimer. It depends on a divalent metal cation as a cofactor.

The catalysed reaction is 4-CDP-2-C-methyl-D-erythritol 2-phosphate = 2-C-methyl-D-erythritol 2,4-cyclic diphosphate + CMP. Its pathway is isoprenoid biosynthesis; isopentenyl diphosphate biosynthesis via DXP pathway; isopentenyl diphosphate from 1-deoxy-D-xylulose 5-phosphate: step 4/6. Functionally, involved in the biosynthesis of isopentenyl diphosphate (IPP) and dimethylallyl diphosphate (DMAPP), two major building blocks of isoprenoid compounds. Catalyzes the conversion of 4-diphosphocytidyl-2-C-methyl-D-erythritol 2-phosphate (CDP-ME2P) to 2-C-methyl-D-erythritol 2,4-cyclodiphosphate (ME-CPP) with a corresponding release of cytidine 5-monophosphate (CMP). This chain is 2-C-methyl-D-erythritol 2,4-cyclodiphosphate synthase, found in Methylobacillus flagellatus (strain ATCC 51484 / DSM 6875 / VKM B-1610 / KT).